The following is a 252-amino-acid chain: MTGRMPGLIVLFDVDGTLTAPRKAITPKMLEFMQDLRKVVTVGVVGGSDLVKISEQLGKSVISDYDYVFAENGLVAYKNGELIGKQNFKSFLGEEKLKELINFTLHYIADLDIPIKRGTFIEFRSGMLNVSPIGRNCSQEERDEFEKYDKVHNIRSKMVSVLREKFKHLNLTFSIGGQISFDVFPQGWDKTYCLRYLEDFPEIHFFGDKTYKGGNDYEIYESERTVGHTVTSPDDTAEQCKLHFLAKQAGDA.

The active-site Nucleophile is Asp13. Positions 13 and 15 each coordinate Mg(2+). Residue Asp15 is the Proton donor/acceptor of the active site. Residues Arg22, Arg124, Arg135, Arg142, Ser180, and Asp182 each coordinate alpha-D-mannose 1-phosphate. Mg(2+)-binding residues include Asp208, Tyr220, and Thr225.

Belongs to the eukaryotic PMM family. In terms of assembly, homodimer. The cofactor is Mg(2+). Expressed in roots, leaves, stems and flowers.

It localises to the cytoplasm. It carries out the reaction alpha-D-mannose 1-phosphate = D-mannose 6-phosphate. It functions in the pathway nucleotide-sugar biosynthesis; GDP-alpha-D-mannose biosynthesis; alpha-D-mannose 1-phosphate from D-fructose 6-phosphate: step 2/2. In terms of biological role, catalyzes the interconversion of mannose-6-phosphate to mannose-1-phosphate, the precursor for the synthesis of GDP-mannose. GDP-mannose is an essential sugar nucleotide for the synthesis of D-mannose-containing cell wall polysaccharides (galactomannans and glucomannans), glycolipids, glycoproteins and the antioxidant L-ascorbate. Involved in the biosynthesis of ascorbate and polysaccharides in response to abiotic stress during seed germination. This chain is Phosphomannomutase, found in Dendrobium officinale (Orchid).